The following is a 399-amino-acid chain: Insertion element IS116 uncharacterized 44.8 kDa protein (399 aa).

This sequence belongs to the transposase IS1111A/IS1328/IS1533 family.

This is Insertion element IS116 uncharacterized 44.8 kDa protein from Streptomyces clavuligerus.